We begin with the raw amino-acid sequence, 1082 residues long: AP-3 complex subunit beta-2 (1082 aa).

A disordered region spans residues 1-30 (MSAAPAYSEDKGGSAGPGEPEYGHDPASGG). Residues Ser-272 and Ser-282 each carry the phosphoserine modification. Residues 666 to 677 (NREKRKEKEKPF) are compositionally biased toward basic and acidic residues. Positions 666-801 (NREKRKEKEK…KTPPGSKSAP (136 aa)) are disordered. The segment covering 691–700 (ADSEPESESE) has biased composition (acidic residues). Over residues 704 to 715 (KSSSGSGSGESS) the composition is skewed to low complexity. Composition is skewed to acidic residues over residues 716 to 726 (SESDNEEEDEE) and 775 to 784 (VTSESEEEQV).

The protein belongs to the adaptor complexes large subunit family. In terms of assembly, adaptor protein complex 3 (AP-3) is a heterotetramer composed of two large adaptins (delta-type subunit AP3D1 and beta-type subunit AP3B1 or AP3B2), a medium adaptin (mu-type subunit AP3M1 or AP3M2) and a small adaptin (sigma-type subunit APS1 or AP3S2). AP-3 associates with the BLOC-1 complex.

Its subcellular location is the cytoplasmic vesicle. It localises to the clathrin-coated vesicle membrane. The protein resides in the golgi apparatus. Its function is as follows. Subunit of non-clathrin- and clathrin-associated adaptor protein complex 3 (AP-3) that plays a role in protein sorting in the late-Golgi/trans-Golgi network (TGN) and/or endosomes. The AP complexes mediate both the recruitment of clathrin to membranes and the recognition of sorting signals within the cytosolic tails of transmembrane cargo molecules. AP-3 appears to be involved in the sorting of a subset of transmembrane proteins targeted to lysosomes and lysosome-related organelles. In concert with the BLOC-1 complex, AP-3 is required to target cargos into vesicles assembled at cell bodies for delivery into neurites and nerve terminals. In Mus musculus (Mouse), this protein is AP-3 complex subunit beta-2 (Ap3b2).